The following is a 409-amino-acid chain: Peptidase T (409 aa).

His-78 serves as a coordination point for Zn(2+). The active site involves Asp-80. Residue Asp-140 participates in Zn(2+) binding. The Proton acceptor role is filled by Glu-173. Zn(2+) contacts are provided by Glu-174, Asp-196, and His-379.

Belongs to the peptidase M20B family. It depends on Zn(2+) as a cofactor.

It is found in the cytoplasm. It catalyses the reaction Release of the N-terminal residue from a tripeptide.. In terms of biological role, cleaves the N-terminal amino acid of tripeptides. This Salmonella enteritidis PT4 (strain P125109) protein is Peptidase T.